The sequence spans 413 residues: Porin PorA (413 aa).

An N-terminal signal peptide occupies residues 1–22; that stretch reads MKKVVSSLLIILGAAMLIFAIA. Residues 265–288 form a disordered region; that stretch reads TKSAADSKDDKKKDGDKKDEKSPE.

It belongs to the PorA family.

It is found in the secreted. Its subcellular location is the cell wall. Functionally, forms water-filled channels that favor the permeation of cations. The polypeptide is Porin PorA (Corynebacterium resistens (strain DSM 45100 / JCM 12819 / GTC 2026 / SICGH 158)).